The following is a 274-amino-acid chain: tRNA-cytidine(32) 2-sulfurtransferase (274 aa).

Residues 40 to 45 (SGGKDS) carry the PP-loop motif motif. [4Fe-4S] cluster contacts are provided by cysteine 115, cysteine 118, and cysteine 206.

It belongs to the TtcA family. In terms of assembly, homodimer. Mg(2+) serves as cofactor. The cofactor is [4Fe-4S] cluster.

The protein localises to the cytoplasm. It catalyses the reaction cytidine(32) in tRNA + S-sulfanyl-L-cysteinyl-[cysteine desulfurase] + AH2 + ATP = 2-thiocytidine(32) in tRNA + L-cysteinyl-[cysteine desulfurase] + A + AMP + diphosphate + H(+). Its pathway is tRNA modification. In terms of biological role, catalyzes the ATP-dependent 2-thiolation of cytidine in position 32 of tRNA, to form 2-thiocytidine (s(2)C32). The sulfur atoms are provided by the cysteine/cysteine desulfurase (IscS) system. In Pseudomonas syringae pv. syringae (strain B728a), this protein is tRNA-cytidine(32) 2-sulfurtransferase.